A 171-amino-acid chain; its full sequence is NADH-quinone oxidoreductase subunit I 2 (171 aa).

4Fe-4S ferredoxin-type domains are found at residues 39–71 and 81–110; these read IVLTRDPDGQERCVACNLCAVACPVGCIDLSKA and EHFRINFARCIFCGYCEEACPTAAIQLTPD. Residues Cys51, Cys54, Cys57, Cys61, Cys90, Cys93, Cys96, and Cys100 each coordinate [4Fe-4S] cluster.

This sequence belongs to the complex I 23 kDa subunit family. As to quaternary structure, NDH-1 is composed of 14 different subunits. Subunits NuoA, H, J, K, L, M, N constitute the membrane sector of the complex. It depends on [4Fe-4S] cluster as a cofactor.

The protein resides in the cell inner membrane. The enzyme catalyses a quinone + NADH + 5 H(+)(in) = a quinol + NAD(+) + 4 H(+)(out). Functionally, NDH-1 shuttles electrons from NADH, via FMN and iron-sulfur (Fe-S) centers, to quinones in the respiratory chain. The immediate electron acceptor for the enzyme in this species is believed to be ubiquinone. Couples the redox reaction to proton translocation (for every two electrons transferred, four hydrogen ions are translocated across the cytoplasmic membrane), and thus conserves the redox energy in a proton gradient. In Rhodopseudomonas palustris (strain BisB18), this protein is NADH-quinone oxidoreductase subunit I 2.